Consider the following 327-residue polypeptide: Aspartate carbamoyltransferase catalytic subunit (327 aa).

Carbamoyl phosphate contacts are provided by R73 and T74. An L-aspartate-binding site is contributed by K101. R123, H153, and Q156 together coordinate carbamoyl phosphate. L-aspartate is bound by residues R186 and R241. Residues G282 and P283 each coordinate carbamoyl phosphate.

The protein belongs to the aspartate/ornithine carbamoyltransferase superfamily. ATCase family. As to quaternary structure, heterododecamer (2C3:3R2) of six catalytic PyrB chains organized as two trimers (C3), and six regulatory PyrI chains organized as three dimers (R2).

The enzyme catalyses carbamoyl phosphate + L-aspartate = N-carbamoyl-L-aspartate + phosphate + H(+). It functions in the pathway pyrimidine metabolism; UMP biosynthesis via de novo pathway; (S)-dihydroorotate from bicarbonate: step 2/3. Catalyzes the condensation of carbamoyl phosphate and aspartate to form carbamoyl aspartate and inorganic phosphate, the committed step in the de novo pyrimidine nucleotide biosynthesis pathway. The protein is Aspartate carbamoyltransferase catalytic subunit of Acidithiobacillus ferrooxidans (strain ATCC 23270 / DSM 14882 / CIP 104768 / NCIMB 8455) (Ferrobacillus ferrooxidans (strain ATCC 23270)).